A 712-amino-acid polypeptide reads, in one-letter code: Sesterterpene synthase btcA (712 aa).

Residues 1–332 (MTTIWEHCVD…CANCPRHHAW (332 aa)) are terpene cyclase. Aspartate 96 provides a ligand contact to Mg(2+). Substrate contacts are provided by residues aspartate 96, asparagine 234, 238-242 (SWDRE), and 328-329 (RH). Residues 96–100 (DDLCD) carry the DDXXD 1 motif. The short motif at 234–242 (NDYWSWDRE) is the NSE/DTE element. The segment at 333-706 (RDEESSPSER…VMRIVLSRLS (374 aa)) is prenyltransferase. The segment at 334 to 373 (DEESSPSERSFSPSNEGIEDPRLSPGASTTSSMSQKSSPA) is disordered. 2 stretches are compositionally biased toward low complexity: residues 340 to 349 (SERSFSPSNE) and 361 to 373 (STTS…SSPA). Positions 414, 417, and 446 each coordinate isopentenyl diphosphate. 2 residues coordinate Mg(2+): aspartate 453 and aspartate 457. Residues 453-457 (DDIED) carry the DDXXD 2 motif. Arginine 462 contributes to the dimethylallyl diphosphate binding site. An isopentenyl diphosphate-binding site is contributed by arginine 463. Dimethylallyl diphosphate contacts are provided by lysine 540, threonine 541, glutamine 580, asparagine 587, lysine 597, and lysine 607.

The protein in the N-terminal section; belongs to the terpene synthase family. This sequence in the C-terminal section; belongs to the FPP/GGPP synthase family. Hexamer. It depends on Mg(2+) as a cofactor.

The enzyme catalyses isopentenyl diphosphate + (2E,6E)-farnesyl diphosphate = (2E,6E,10E)-geranylgeranyl diphosphate + diphosphate. The catalysed reaction is isopentenyl diphosphate + (2E,6E,10E)-geranylgeranyl diphosphate = (2E,6E,10E,14E)-geranylfarnesyl diphosphate + diphosphate. Its pathway is secondary metabolite biosynthesis; terpenoid biosynthesis. Its function is as follows. Bifunctional terpene synthase; part of the gene cluster that mediates the biosynthesis of betaestacins. The bifunctional terpene synthase btcA converts isopentenyl diphosphate (IPP) and dimethylallyl diphosphate (DMAPP) into the sesterterpene betaestacin I. The C-terminal prenyltransferase (PT) domain of btcA catalyzes formation of GFPP, whereas the N-terminal terpene cyclase (TC) domain catalyzes the cyclization of GFPP into betaestacin I. The cytochrome P450 monooxygenase btcB oxidizes the C25 methyl group of betaestacin I to yield the carboxylic acid betaestacin IV via the alcohol betaestacin III. The cytochrome P450 monooxygenase btcC further catalyzes the multistep oxidation of betaestacin IV to produce several compounds, including betaestacins Va, Vb, Vc and VI. The sequence is that of Sesterterpene synthase btcA from Colletotrichum orbiculare (strain 104-T / ATCC 96160 / CBS 514.97 / LARS 414 / MAFF 240422) (Cucumber anthracnose fungus).